The following is a 407-amino-acid chain: Nicotinate phosphoribosyltransferase (407 aa).

At His228 the chain carries Phosphohistidine; by autocatalysis.

The protein belongs to the NAPRTase family. Transiently phosphorylated on a His residue during the reaction cycle. Phosphorylation strongly increases the affinity for substrates and increases the rate of nicotinate D-ribonucleotide production. Dephosphorylation regenerates the low-affinity form of the enzyme, leading to product release.

It catalyses the reaction nicotinate + 5-phospho-alpha-D-ribose 1-diphosphate + ATP + H2O = nicotinate beta-D-ribonucleotide + ADP + phosphate + diphosphate. Its pathway is cofactor biosynthesis; NAD(+) biosynthesis; nicotinate D-ribonucleotide from nicotinate: step 1/1. 100-fold more active in the presence of saturating ATP. Its function is as follows. Catalyzes the synthesis of beta-nicotinate D-ribonucleotide from nicotinate and 5-phospho-D-ribose 1-phosphate at the expense of ATP. Functions in the deamidating salvage pathway for production of NAD from nicotinamide. Displays a strict preference for nicotinate over nicotinamide substrate. This chain is Nicotinate phosphoribosyltransferase, found in Acinetobacter baylyi (strain ATCC 33305 / BD413 / ADP1).